The primary structure comprises 396 residues: Diels-Alderase mpsD (396 aa).

Belongs to the Diels-Alderase family.

It participates in secondary metabolite biosynthesis. Diels-Alderase; part of the gene cluster that mediates the biosynthesis of macrophasetins, 3-decalinoyltetramic acids (DTAs) which feature a tetramate (pyrrolidine-2,4-dione) unit connected to a decalin fragment and that have potent bioactivities. The PKS-NRPS mpsA together with its associated enoylreductase partner mpsG incorporate one unit of acetyl-CoA, seven units of malonyl-CoA, and one unit of L-alanine to assemble the linear tetramic acid intermediate corresponding to the backbone of macrophasetins. Without the Diels-Alderase mpsD, the mpsA/G product can undergo the non-enzymatic intramolecular Diels-Alder (IMDA) reaction to generate both macrophasetin A and macrophasetin B. Catalyzed by mpsD, the linear tetramic acid intermediate is thoroughly converted to macrophasetin A via the endo-IMDA reaction in a regioselective and stereoselective manner. Finally, the cytochrome P450 monooxygenase mpsF catalyzes the hydroxylation at C20 to yield the end product macrophasetin C. The protein is Diels-Alderase mpsD of Macrophomina phaseolina (strain MS6) (Charcoal rot fungus).